Here is a 222-residue protein sequence, read N- to C-terminus: Ribonuclease T (222 aa).

An Exonuclease domain is found at 20–194 (VVIDVETAGF…YDTERTAELF (175 aa)). Mg(2+)-binding residues include aspartate 23, glutamate 25, histidine 181, and aspartate 186. Histidine 181 functions as the Proton donor/acceptor in the catalytic mechanism.

It belongs to the RNase T family. As to quaternary structure, homodimer. It depends on Mg(2+) as a cofactor.

In terms of biological role, trims short 3' overhangs of a variety of RNA species, leaving a one or two nucleotide 3' overhang. Responsible for the end-turnover of tRNA: specifically removes the terminal AMP residue from uncharged tRNA (tRNA-C-C-A). Also appears to be involved in tRNA biosynthesis. In Shewanella sp. (strain ANA-3), this protein is Ribonuclease T.